A 279-amino-acid chain; its full sequence is MKTTTDFLKMKAAGEKIVMVTAYDYPAAKFAEAANVDMILVGDSLGMVVLGYDSTMPVTVADMIHHAKATRRGAKDTFVVVDMPFGSYHGDVNETLKTAIYMMQETGADALKVEGAGDIIPVIQKLTTAGIPVVAHLGLLPQSAGVLGGYKVQGKTAEQATKLIEDAKQCEEAGACAVVLECIPHQLTEIVSAHLIIPTIGIGAGVEADGQVLVYHDMLSYGSHHVPKFVQQFANMGKEASEGMVRYVEAVKAGTFPAQKHFFTMKEDALDQLYGGVQS.

Mg(2+) is bound by residues D43 and D82. Residues 43–44 (DS), D82, and K112 contribute to the 3-methyl-2-oxobutanoate site. E114 contacts Mg(2+). The Proton acceptor role is filled by E181.

This sequence belongs to the PanB family. As to quaternary structure, homodecamer; pentamer of dimers. The cofactor is Mg(2+).

The protein resides in the cytoplasm. It catalyses the reaction 3-methyl-2-oxobutanoate + (6R)-5,10-methylene-5,6,7,8-tetrahydrofolate + H2O = 2-dehydropantoate + (6S)-5,6,7,8-tetrahydrofolate. The protein operates within cofactor biosynthesis; (R)-pantothenate biosynthesis; (R)-pantoate from 3-methyl-2-oxobutanoate: step 1/2. Catalyzes the reversible reaction in which hydroxymethyl group from 5,10-methylenetetrahydrofolate is transferred onto alpha-ketoisovalerate to form ketopantoate. The protein is 3-methyl-2-oxobutanoate hydroxymethyltransferase of Lysinibacillus sphaericus (strain C3-41).